The following is a 183-amino-acid chain: NADH-quinone oxidoreductase subunit A (183 aa).

The next 3 membrane-spanning stretches (helical) occupy residues 11-31 (IIAF…VPLL), 63-83 (FYLV…LYAW), and 98-118 (VVIF…VGAL). Residues 159 to 183 (TGQIPAQSSGRVKSKTTPALSSEKE) are disordered.

Belongs to the complex I subunit 3 family. NDH-1 is composed of 14 different subunits. Subunits NuoA, H, J, K, L, M, N constitute the membrane sector of the complex.

The protein localises to the cell inner membrane. It catalyses the reaction a quinone + NADH + 5 H(+)(in) = a quinol + NAD(+) + 4 H(+)(out). Functionally, NDH-1 shuttles electrons from NADH, via FMN and iron-sulfur (Fe-S) centers, to quinones in the respiratory chain. The immediate electron acceptor for the enzyme in this species is believed to be ubiquinone. Couples the redox reaction to proton translocation (for every two electrons transferred, four hydrogen ions are translocated across the cytoplasmic membrane), and thus conserves the redox energy in a proton gradient. This is NADH-quinone oxidoreductase subunit A from Acinetobacter baumannii (strain ACICU).